The sequence spans 326 residues: uncharacterized protein (326 aa).

An S4 RNA-binding domain is found at 15-76 (VRIEKFCLKL…IEPYLHNHSE (62 aa)). The active site involves Asp147.

It belongs to the pseudouridine synthase RluA family.

The catalysed reaction is a uridine in RNA = a pseudouridine in RNA. This is an uncharacterized protein from Mycoplasma pneumoniae (strain ATCC 29342 / M129 / Subtype 1) (Mycoplasmoides pneumoniae).